The chain runs to 95 residues: MLKSNNASETATRKVGDKTAKKVFFRRRKGCPLSVPNAPVIDYKNPELLIKFVSEGGRMLPSRITNVCAKKQRKLNNAIKIARILALLPFVFQAK.

It belongs to the bacterial ribosomal protein bS18 family. In terms of assembly, part of the 30S ribosomal subunit. Forms a tight heterodimer with protein bS6.

Binds as a heterodimer with protein bS6 to the central domain of the 16S rRNA, where it helps stabilize the platform of the 30S subunit. The protein is Small ribosomal subunit protein bS18 of Rickettsia felis (strain ATCC VR-1525 / URRWXCal2) (Rickettsia azadi).